Reading from the N-terminus, the 377-residue chain is Sodium-dependent organic anion transporter (377 aa).

Residues 1-29 (MRANCSSGLACPANSSEEELPEGLKAFGN) are Extracellular-facing. N-linked (GlcNAc...) asparagine glycosylation occurs at N4. A helical membrane pass occupies residues 30-50 (LDLVFTVVSALMIGLLMFSLG). At 51 to 67 (CSVEVQKLWGHIRRPWG) the chain is on the cytoplasmic side. The chain crosses the membrane as a helical span at residues 68–88 (IAVGMLCQFGLMPLIAYLLII). Residues 89-97 (SFSLKPLQA) are Extracellular-facing. Residues 98 to 118 (IAVLIMGCCPGGTVSNIFTFW) traverse the membrane as a helical segment. Residues 119–133 (VDGDMDLSISMTTCS) are Cytoplasmic-facing. A helical transmembrane segment spans residues 134-154 (TMAALGMMPLCLYLYTLSWNL). Over 155–159 (EQNLT) the chain is Extracellular. An N-linked (GlcNAc...) asparagine glycan is attached at N157. A helical membrane pass occupies residues 160 to 180 (IPYQNIGITLVCLIIPVAFGI). Topologically, residues 181 to 195 (YVNYRWPKQSKIILK) are cytoplasmic. A helical membrane pass occupies residues 196–216 (IGAIAGGLLFLVVTGAGMVLM). Topologically, residues 217-223 (KEFWSSD) are extracellular. The chain crosses the membrane as a helical span at residues 224-244 (IILLMISFIFPLIGHATGFLL). Residues 245-257 (ALLTHQSWQRCRT) are Cytoplasmic-facing. Residues 258–278 (ISLETGTQNVQMCFTMLQLSF) traverse the membrane as a helical segment. The Extracellular portion of the chain corresponds to 279-285 (TAEQLVQ). A helical membrane pass occupies residues 286 to 306 (IFGFVLAYGLFQMLNGFFMVA). The Cytoplasmic segment spans residues 307-377 (AYKMYKRRLK…TPTGDIARAK (71 aa)). A disordered region spans residues 319–377 (HGNEKPSCQEARHRKKSTSPKETTAFLEVNEEATLSPGPSGPVDPHGAPTPTGDIARAK).

Belongs to the bile acid:sodium symporter (BASS) (TC 2.A.28) family. In terms of processing, glycosylated.

The protein resides in the membrane. It carries out the reaction estrone 3-sulfate(out) + 2 Na(+)(out) = estrone 3-sulfate(in) + 2 Na(+)(in). The enzyme catalyses 17beta-estradiol 3-sulfate(out) + 2 Na(+)(out) = 17beta-estradiol 3-sulfate(in) + 2 Na(+)(in). It catalyses the reaction dehydroepiandrosterone 3-sulfate(out) + 2 Na(+)(out) = dehydroepiandrosterone 3-sulfate(in) + 2 Na(+)(in). The catalysed reaction is androst-5-ene-diol 3-sulfate(out) + 2 Na(+)(out) = androst-5-ene-diol 3-sulfate(in) + 2 Na(+)(in). It carries out the reaction pregnenolone sulfate(out) + 2 Na(+)(out) = pregnenolone sulfate(in) + 2 Na(+)(in). The enzyme catalyses taurolithocholate 3-sulfate(out) + 2 Na(+)(out) = taurolithocholate 3-sulfate(in) + 2 Na(+)(in). It catalyses the reaction androsterone 3alpha-sulfate(out) + 2 Na(+)(out) = androsterone 3alpha-sulfate(in) + 2 Na(+)(in). The catalysed reaction is 5alpha-dihydrotestosterone sulfate(out) + 2 Na(+)(out) = 5alpha-dihydrotestosterone sulfate(in) + 2 Na(+)(in). It carries out the reaction 17beta-estradiol 17-sulfate(out) + 2 Na(+)(out) = 17beta-estradiol 17-sulfate(in) + 2 Na(+)(in). The enzyme catalyses 17alpha-hydroxypregnenolone 3-sulfate(out) + 2 Na(+)(out) = 17alpha-hydroxypregnenolone 3-sulfate(in) + 2 Na(+)(in). It catalyses the reaction epiandrosterone 3-sulfate(out) + 2 Na(+)(out) = epiandrosterone 3-sulfate(in) + 2 Na(+)(in). The catalysed reaction is epitestosterone 17-sulfate(out) + 2 Na(+)(out) = epitestosterone 17-sulfate(in) + 2 Na(+)(in). It carries out the reaction testosterone 17-sulfate(out) + 2 Na(+)(out) = testosterone 17-sulfate(in) + 2 Na(+)(in). The enzyme catalyses 16alpha-hydroxydehydroepiandrosterone 3-sulfate(out) + 2 Na(+)(out) = 16alpha-hydroxydehydroepiandrosterone 3-sulfate(in) + 2 Na(+)(in). In terms of biological role, transports sulfoconjugated steroid hormones from the extracellular compartment into the cytosol in a sodium-dependent manner without hydrolysis. Steroid sulfate hormones are commonly considered to be biologically inactive metabolites, that may be activated by steroid sulfatases into free steroids. May play an important role by delivering sulfoconjugated steroids to specific target cells in reproductive organs. May play a role transporting the estriol precursor 16alpha-hydroxydehydroepiandrosterone 3-sulfate (16a-OH-DHEAS) at the fetal blood vessel endothelium. Can also transport other sulfoconjugated molecules such as taurolithocholic acid-3-sulfate and sulfoconjugated pyrenes. The chain is Sodium-dependent organic anion transporter (SLC10A6) from Bos taurus (Bovine).